The sequence spans 1025 residues: Transcription factor tau 131 kDa subunit (1025 aa).

Residues 1–26 are compositionally biased toward basic and acidic residues; it reads MAAGKLKKEQQNQSAERESADTGKVN. Positions 1–71 are disordered; the sequence is MAAGKLKKEQ…EDEYNSERDS (71 aa). The segment covering 46–65 has biased composition (acidic residues); the sequence is DEEYDDEDVPHDLQLSEDEY. TPR repeat units lie at residues 128–161, 162–195, 196–229, 230–263, and 264–297; these read VAQLLSQANEAFVRNDLQVAERLFNEVIKKDARN, FAAYETLGDIYQLQGRLNDCCNSWFLAAHLNASD, WEFWKIVAILSADLDHVRQAIYCFSRVISLNPME, WESIYRRSMLYKKTGQLARALDGFQRLYMYNPYD, and ANILRELAILYVDYDRIEDSIELYMKVFNANVER. Residues 128-569 form a sufficient to bind BDP1 region; that stretch reads VAQLLSQANE…VDVVEMRKHQ (442 aa). Residues 309-334 form a disordered region; the sequence is LDSSDEESAAEGEDADEKEPLEQDED. Position 311 is a phosphoserine (Ser311). Acidic residues predominate over residues 311–325; it reads SSDEESAAEGEDADE. TPR repeat units lie at residues 432-465, 467-501, 502-535, 536-569, 875-908, and 959-992; these read IDIRVRLGLLRLNTDNLVEALNHFQCLYDETFSD, ADLYFEAATALTRAEKYKEAIDFFTPLLSLEEWRT, TDVFKPLARCYKEIESYETAKEFYELAIKSEPDD, LDIRVSLAEVYYRLNDPETFKHMLVDVVEMRKHQ, PYLYYIYAVLLYSSRGFLSALQYLTRLEEDIPDD, and QEADYNLGRAFHLIGLVSIAIEYYNRVLENYDDG.

Component of the TFIIIC complex composed of TFC1, TFC3, TFC4, TFC6, TFC7 and TFC8. The subunits are organized in two globular domains, tauA and tauB, connected by a proteolysis-sensitive and flexible linker. Interacts with TFC1, TFC3, TFC6, TFIIIB subunits BRF1 and BDP1, and with RNA polymerase III subunit RPC10. Post-translationally, phosphorylated.

The protein localises to the nucleus. Its function is as follows. TFIIIC mediates tRNA and 5S RNA gene activation by binding to intragenic promoter elements. Upstream of the transcription start site, TFIIIC assembles the initiation complex TFIIIB-TFIIIC-tDNA, which is sufficient for RNA polymerase III recruitment and function. Part of the tauA domain of TFIIIC that binds boxA DNA promoter sites of tRNA and similar genes. TFC4 is the TFIIIB-assembling subunit of TFIIIC and essential for viability. The chain is Transcription factor tau 131 kDa subunit (TFC4) from Saccharomyces cerevisiae (strain ATCC 204508 / S288c) (Baker's yeast).